Consider the following 1311-residue polypeptide: Clustered mitochondria protein homolog (1311 aa).

Residues 1–18 (MAEKTNGAAAPNGAADAP) show a composition bias toward low complexity. Positions 1-27 (MAEKTNGAAAPNGAADAPKSSPEQAQD) are disordered. A Clu domain is found at 324 to 568 (DITRTQESFL…RITPLDVSWQ (245 aa)). The stretch at 491–525 (IDYGAVDGKDLVATDERFVPQFQKLSKALKVKPHA) is one TPR 1 repeat. The span at 606-630 (SEVAKRGQAKKDQAAVEEKKEAKAE) shows a compositional bias: basic and acidic residues. Disordered stretches follow at residues 606–694 (SEVA…SSDR) and 925–966 (PAPV…SSTI). Over residues 631-661 (SEEDSDSSSEEESSSDESDSEESSSDEDEEE) the composition is skewed to acidic residues. A compositionally biased stretch (basic residues) spans 665-675 (PKKKSVPKKAA). Basic and acidic residues predominate over residues 676–694 (KKEEVKEEKKDEKEASSDR). TPR repeat units follow at residues 1034–1067 (ARVY…AERT), 1076–1109 (LLDY…WKII), and 1118–1151 (ITTI…CEVV). Over residues 1276 to 1286 (LKFIEGTDKQK) the composition is skewed to basic and acidic residues. The tract at residues 1276 to 1311 (LKFIEGTDKQKKPAAKKRTGRANPKRRGAEPVSTKA) is disordered. Residues 1287–1301 (KPAAKKRTGRANPKR) show a composition bias toward basic residues.

It belongs to the CLU family. May associate with the eukaryotic translation initiation factor 3 (eIF-3) complex.

It is found in the cytoplasm. Functionally, mRNA-binding protein involved in proper cytoplasmic distribution of mitochondria. This is Clustered mitochondria protein homolog from Pyricularia oryzae (strain 70-15 / ATCC MYA-4617 / FGSC 8958) (Rice blast fungus).